The sequence spans 782 residues: Protein PAT1 homolog 1 (782 aa).

4 disordered regions span residues 96-153, 177-217, 332-372, and 460-481; these read GPKH…HSKP, LPES…YSAP, VREH…SKHM, and EVDS…GKHL. The span at 108 to 117 shows a compositional bias: low complexity; the sequence is SGSFSRESSS. The span at 208–217 shows a compositional bias: polar residues; sequence GGSQLTYSAP. The span at 335–347 shows a compositional bias: basic residues; the sequence is HKHKSSHRSRKNR. A compositionally biased stretch (polar residues) spans 348–366; that stretch reads GLSQQTSDAASQKSETGLQ. Residues 471 to 481 show a composition bias toward basic and acidic residues; the sequence is SGDHKGSGKHL.

In terms of assembly, interacts with AFPH2/NINJA. Expressed in root vasculature, shoot apical meristem (SAM) and leaves.

Activator of mRNA decapping. Involved in mRNA decay via decapping. Involved in the regulation of root stem cell niche identity. Maintains root stem cell niche stability through the interaction with the negative regulator of jasmonate signaling AFPH2/NINJA, and the regulation of cell division. The sequence is that of Protein PAT1 homolog 1 from Arabidopsis thaliana (Mouse-ear cress).